The following is a 263-amino-acid chain: Acetylglutamate kinase (263 aa).

Substrate contacts are provided by residues Gly49–Gly50, Arg71, and Asn163.

It belongs to the acetylglutamate kinase family. ArgB subfamily.

It is found in the cytoplasm. It carries out the reaction N-acetyl-L-glutamate + ATP = N-acetyl-L-glutamyl 5-phosphate + ADP. It participates in amino-acid biosynthesis; L-arginine biosynthesis; N(2)-acetyl-L-ornithine from L-glutamate: step 2/4. Its function is as follows. Catalyzes the ATP-dependent phosphorylation of N-acetyl-L-glutamate. This Moritella abyssi protein is Acetylglutamate kinase.